We begin with the raw amino-acid sequence, 691 residues long: Protein vreteno (691 aa).

The disordered stretch occupies residues 128–155 (QKEREITSDPVTSTEPMPTPGPAISATE). Tudor domains lie at 366 to 427 (KLQS…LAGL) and 573 to 630 (APPI…FIFP).

Interacts with aub and piwi. In terms of tissue distribution, gonad-specific.

Its subcellular location is the cytoplasm. It is found in the cytoplasmic ribonucleoprotein granule. Gonad-specific protein essential for germline development to repress transposable elements and preventing their mobilization, which is essential for the germline integrity. Acts via the piRNA metabolic process in both germline and somatic gonadal tissues by mediating the repression of transposable elements during meiosis. Required for primary piRNA biogenesis in both germline and somatic gonadal tissues. This is Protein vreteno (vret) from Drosophila melanogaster (Fruit fly).